Reading from the N-terminus, the 504-residue chain is MEQYKAYLELHRSRYQDILYPLFFRESIYGLAYRHESFFIENVDYNNNFSLLIVKRLSTRMYQQTHFILFVNDSKKNTFVGYNYHFYSQIILEGFGIVVEILFSLQLFSSSFRGLEIVKSYTNLQSIHSIFPFFEDKLIYLNHKSDIRIPYPIHLEILVQILRYSIKDVSFFHLIRLFFYYYSNWNSLFPPKKWIFTFFSKRNRRIFLFLYNLYVWEYESIFLFLRNKSSQLQLKHFRVFFERIFFYEKIKHLVKVSTKNCSYTLFFFKDTFIHYVRYQGKSILVLKNTPFLINKWKYYFIYLWQCHFDIWAGLETIYINELSQYSFHFLGYFLSIPLNLSVVRSQMLQNSFLIQIVIKKLDTIVPIIPLMRSLAKTKFCNVMGHPISKPVWANLSDFDILDRFLRICRNFSHYYNGSAKKKSFYQIKYILRFSCIKTLARKHKSTVRIYLKKLSSEKLLEEFFTEEDLFSLIFPRTSLTLRRFYRGRIWYLDILFRNDFVNYL.

This sequence belongs to the intron maturase 2 family. MatK subfamily.

The protein localises to the plastid. It is found in the chloroplast. Its function is as follows. Usually encoded in the trnK tRNA gene intron. Probably assists in splicing its own and other chloroplast group II introns. The chain is Maturase K from Vigna mungo (Black gram).